Here is an 875-residue protein sequence, read N- to C-terminus: uncharacterized protein (875 aa).

This is an uncharacterized protein from Mycobacterium bovis (strain ATCC BAA-935 / AF2122/97).